A 779-amino-acid chain; its full sequence is Endonuclease MutS2 (779 aa).

Residue Gly-328–Thr-335 participates in ATP binding. The region spanning Leu-704–Gly-779 is the Smr domain.

This sequence belongs to the DNA mismatch repair MutS family. MutS2 subfamily. In terms of assembly, homodimer. Binds to stalled ribosomes, contacting rRNA.

Its function is as follows. Endonuclease that is involved in the suppression of homologous recombination and thus may have a key role in the control of bacterial genetic diversity. Acts as a ribosome collision sensor, splitting the ribosome into its 2 subunits. Detects stalled/collided 70S ribosomes which it binds and splits by an ATP-hydrolysis driven conformational change. Acts upstream of the ribosome quality control system (RQC), a ribosome-associated complex that mediates the extraction of incompletely synthesized nascent chains from stalled ribosomes and their subsequent degradation. Probably generates substrates for RQC. The chain is Endonuclease MutS2 from Streptococcus pyogenes serotype M18 (strain MGAS8232).